The primary structure comprises 310 residues: Ribosomal RNA small subunit methyltransferase H (310 aa).

S-adenosyl-L-methionine is bound by residues 32–34 (GGH), D52, F79, D100, and Q107.

The protein belongs to the methyltransferase superfamily. RsmH family.

Its subcellular location is the cytoplasm. The enzyme catalyses cytidine(1402) in 16S rRNA + S-adenosyl-L-methionine = N(4)-methylcytidine(1402) in 16S rRNA + S-adenosyl-L-homocysteine + H(+). Its function is as follows. Specifically methylates the N4 position of cytidine in position 1402 (C1402) of 16S rRNA. This is Ribosomal RNA small subunit methyltransferase H from Geobacillus thermodenitrificans (strain NG80-2).